Reading from the N-terminus, the 711-residue chain is Ribosomal RNA large subunit methyltransferase K/L (711 aa).

Residues threonine 43–leucine 154 form the THUMP domain.

This sequence belongs to the methyltransferase superfamily. RlmKL family.

It is found in the cytoplasm. It catalyses the reaction guanosine(2445) in 23S rRNA + S-adenosyl-L-methionine = N(2)-methylguanosine(2445) in 23S rRNA + S-adenosyl-L-homocysteine + H(+). It carries out the reaction guanosine(2069) in 23S rRNA + S-adenosyl-L-methionine = N(2)-methylguanosine(2069) in 23S rRNA + S-adenosyl-L-homocysteine + H(+). Its function is as follows. Specifically methylates the guanine in position 2445 (m2G2445) and the guanine in position 2069 (m7G2069) of 23S rRNA. The sequence is that of Ribosomal RNA large subunit methyltransferase K/L from Haemophilus influenzae (strain PittGG).